Here is a 396-residue protein sequence, read N- to C-terminus: Succinyl-CoA:mesaconate CoA-transferase (396 aa).

D175 (nucleophile) is an active-site residue.

The protein belongs to the CoA-transferase III family. In terms of assembly, homodimer.

It catalyses the reaction mesaconate + succinyl-CoA = 2-methylfumaryl-CoA + succinate. Its activity is regulated as follows. Shows highest activity at 4 M KCl. Does not require divalent ions for activity. In terms of biological role, involved in the methylaspartate cycle. Catalyzes the transfer of the CoA moiety from succinyl-CoA to mesaconate to generate mesaconyl-CoA (2-methylfumaryl-CoA) and succinate. Also shows high activity with methylsuccinate as CoA-acceptor, and only low activity with glutarate, acrylate and itaconate. Cannot use other CoA donors like acetyl-CoA, propionyl-CoA, butyryl-CoA or acetoacetyl-CoA. This is Succinyl-CoA:mesaconate CoA-transferase from Haloarcula hispanica (strain ATCC 33960 / DSM 4426 / JCM 8911 / NBRC 102182 / NCIMB 2187 / VKM B-1755).